Reading from the N-terminus, the 130-residue chain is Ribonuclease VapC22 (130 aa).

Residues V4–R119 form the PINc domain. Residues D7 and D97 each coordinate Mg(2+).

Belongs to the PINc/VapC protein family. Requires Mg(2+) as cofactor.

The protein resides in the secreted. Functionally, toxic component of a type II toxin-antitoxin (TA) system. An RNase. Upon expression in M.smegmatis inhibits translation and colony formation. Its toxic effect on colony formation is neutralized by coexpression with cognate antitoxin VapB22; the effect on translation has not been tested but is probably neutralized also. The sequence is that of Ribonuclease VapC22 from Mycobacterium tuberculosis (strain ATCC 25618 / H37Rv).